Consider the following 145-residue polypeptide: Peptide methionine sulfoxide reductase MsrB (145 aa).

A MsrB domain is found at 6–129 (KNERLQQLTD…NSAALRFIPV (124 aa)). The active-site Nucleophile is C118.

It belongs to the MsrB Met sulfoxide reductase family.

The enzyme catalyses L-methionyl-[protein] + [thioredoxin]-disulfide + H2O = L-methionyl-(R)-S-oxide-[protein] + [thioredoxin]-dithiol. In Listeria monocytogenes serotype 4a (strain HCC23), this protein is Peptide methionine sulfoxide reductase MsrB.